We begin with the raw amino-acid sequence, 297 residues long: Acetyl-coenzyme A carboxylase carboxyl transferase subunit beta (297 aa).

A CoA carboxyltransferase N-terminal domain is found at 27–296 (LWHKCPSCEA…PVETSQVTAK (270 aa)). Zn(2+) is bound by residues C31, C34, C50, and C53. The segment at 31-53 (CPSCEAVLYRPELEKTLDVCPKC) adopts a C4-type zinc-finger fold.

The protein belongs to the AccD/PCCB family. In terms of assembly, acetyl-CoA carboxylase is a heterohexamer composed of biotin carboxyl carrier protein (AccB), biotin carboxylase (AccC) and two subunits each of ACCase subunit alpha (AccA) and ACCase subunit beta (AccD). It depends on Zn(2+) as a cofactor.

The protein localises to the cytoplasm. The enzyme catalyses N(6)-carboxybiotinyl-L-lysyl-[protein] + acetyl-CoA = N(6)-biotinyl-L-lysyl-[protein] + malonyl-CoA. It functions in the pathway lipid metabolism; malonyl-CoA biosynthesis; malonyl-CoA from acetyl-CoA: step 1/1. Its function is as follows. Component of the acetyl coenzyme A carboxylase (ACC) complex. Biotin carboxylase (BC) catalyzes the carboxylation of biotin on its carrier protein (BCCP) and then the CO(2) group is transferred by the transcarboxylase to acetyl-CoA to form malonyl-CoA. The polypeptide is Acetyl-coenzyme A carboxylase carboxyl transferase subunit beta (Stutzerimonas stutzeri (strain A1501) (Pseudomonas stutzeri)).